Reading from the N-terminus, the 292-residue chain is [LysW]-aminoadipate kinase (292 aa).

Substrate-binding residues include R89 and N193.

Belongs to the acetylglutamate kinase family. LysZ subfamily.

It localises to the cytoplasm. It carries out the reaction [amino-group carrier protein]-C-terminal-N-(1,4-dicarboxybutan-1-yl)-L-glutamine + ATP = [amino-group carrier protein]-C-terminal-N-(1-carboxy-5-phosphooxy-5-oxopentan-1-yl)-L-glutamine + ADP. It participates in amino-acid biosynthesis; L-lysine biosynthesis via AAA pathway; L-lysine from L-alpha-aminoadipate (Thermus route): step 2/5. Functionally, catalyzes the phosphorylation of LysW-gamma-alpha-aminoadipate. The chain is [LysW]-aminoadipate kinase from Deinococcus radiodurans (strain ATCC 13939 / DSM 20539 / JCM 16871 / CCUG 27074 / LMG 4051 / NBRC 15346 / NCIMB 9279 / VKM B-1422 / R1).